The primary structure comprises 398 residues: Homeobox protein knotted-1-like 1 (398 aa).

Disordered regions lie at residues T43–H69, E172–L192, and N234–E277. Gly residues predominate over residues S49–G58. Residues E280–L300 form the ELK domain. The segment at residues S301–S364 is a DNA-binding region (homeobox; TALE-type).

It belongs to the TALE/KNOX homeobox family. In terms of tissue distribution, expressed only in the stems.

It localises to the nucleus. In terms of biological role, probably binds to the DNA sequence 5'-TGAC-3'. This is Homeobox protein knotted-1-like 1 from Malus domestica (Apple).